The primary structure comprises 408 residues: Aminomethyltransferase, mitochondrial (408 aa).

Residues 1 to 30 (MRGGLWQLGQSITRRLANGGDKKAVARRCF) constitute a mitochondrion transit peptide. Substrate-binding residues include Glu235, Arg266, and Tyr404.

The protein belongs to the GcvT family. As to quaternary structure, the glycine cleavage system is composed of four proteins: P, T, L and H.

It is found in the mitochondrion. The enzyme catalyses N(6)-[(R)-S(8)-aminomethyldihydrolipoyl]-L-lysyl-[protein] + (6S)-5,6,7,8-tetrahydrofolate = N(6)-[(R)-dihydrolipoyl]-L-lysyl-[protein] + (6R)-5,10-methylene-5,6,7,8-tetrahydrofolate + NH4(+). In terms of biological role, the glycine cleavage system catalyzes the degradation of glycine. The protein is Aminomethyltransferase, mitochondrial (GDCST) of Pisum sativum (Garden pea).